We begin with the raw amino-acid sequence, 195 residues long: Probable nicotinate-nucleotide adenylyltransferase (195 aa).

The protein belongs to the NadD family.

The catalysed reaction is nicotinate beta-D-ribonucleotide + ATP + H(+) = deamido-NAD(+) + diphosphate. The protein operates within cofactor biosynthesis; NAD(+) biosynthesis; deamido-NAD(+) from nicotinate D-ribonucleotide: step 1/1. Functionally, catalyzes the reversible adenylation of nicotinate mononucleotide (NaMN) to nicotinic acid adenine dinucleotide (NaAD). The polypeptide is Probable nicotinate-nucleotide adenylyltransferase (Gluconobacter oxydans (strain 621H) (Gluconobacter suboxydans)).